Reading from the N-terminus, the 331-residue chain is Barley B recombinant-like protein D (331 aa).

Residues 43–101 (ALMNDRDNAIRERDHALAEKKAAIAERDMAFTQRDAAMAERNAAVVERDNALAALELAR) adopt a coiled-coil conformation. Residues 51–86 (AIRERDHALAEKKAAIAERDMAFTQRDAAMAERNAA) are alanine-zipper. Residues 104-122 (GLNMNNGNGFPQGSLSGSK) are compositionally biased toward polar residues. Disordered regions lie at residues 104–140 (GLNM…PLQL) and 156–205 (AYPI…VGMS).

Belongs to the BBR/BPC family. Homodimer. Heterodimer.

It localises to the nucleus. Transcriptional regulator that specifically binds to GA-rich elements (GAGA-repeats) present in regulatory sequences of genes involved in developmental processes. The chain is Barley B recombinant-like protein D from Oryza sativa subsp. japonica (Rice).